The primary structure comprises 549 residues: TBC1 domain family member 3G (549 aa).

A Rab-GAP TBC domain is found at 101–293; sequence GMPMNIRGPM…RLWDVYLVEG (193 aa). Residues Cys318 and Cys325 are each lipidated (S-palmitoyl cysteine). 2 disordered regions span residues 350 to 443 and 507 to 526; these read LTRK…QGGP and AAPSTDSDQGTPFRARDEQQ. Positions 398–417 are enriched in low complexity; it reads PRPIWSASPPRAPRSSTPCP.

Post-translationally, ubiquitinated by a CUL7-based E3 ligase, which leads to proteasomal degradation. In terms of processing, palmitoylation is required for membrane localization and protects TBC1D3 from ubiquitination.

It localises to the cell membrane. Acts as a GTPase activating protein for RAB5. Does not act on RAB4 or RAB11. The protein is TBC1 domain family member 3G (TBC1D3G) of Homo sapiens (Human).